Here is a 598-residue protein sequence, read N- to C-terminus: Fructan 6-exohydrolase (598 aa).

The first 30 residues, 1–30, serve as a signal peptide directing secretion; that stretch reads MAARLPLAACVVAFHLCLLLSSLVRSPSTA. Residue Asp65 is part of the active site. N-linked (GlcNAc...) asparagine glycosylation is found at Asn93, Asn288, and Asn351. Cys451 and Cys497 form a disulfide bridge. A glycan (N-linked (GlcNAc...) asparagine) is linked at Asn572.

The protein belongs to the glycosyl hydrolase 32 family. Expressed in leaves, stems, roots and inflorescences. Maximum expression is detected in stems, particularly the penultimate internode.

The enzyme catalyses Hydrolysis of terminal, non-reducing (2-&gt;6)-linked beta-D-fructofuranose residues in fructans.. Not inhibited by sucrose. Functionally, hydrolyzes levan-type beta-(2-&gt;6)-linked fructans to fructose, but not inulin-type beta-(2-&gt;1)-linked fructans. The polypeptide is Fructan 6-exohydrolase (Triticum aestivum (Wheat)).